Consider the following 45-residue polypeptide: Photosystem II reaction center protein K (45 aa).

Residues 1–8 (MEAALLLA) constitute a propeptide that is removed on maturation. A helical membrane pass occupies residues 24 to 44 (LPLIPLFFLLLAFVWQAAVGF).

Belongs to the PsbK family. As to quaternary structure, PSII is composed of 1 copy each of membrane proteins PsbA, PsbB, PsbC, PsbD, PsbE, PsbF, PsbH, PsbI, PsbJ, PsbK, PsbL, PsbM, PsbT, PsbX, PsbY, PsbZ, Psb30/Ycf12, peripheral proteins PsbO, CyanoQ (PsbQ), PsbU, PsbV and a large number of cofactors. It forms dimeric complexes.

Its subcellular location is the cellular thylakoid membrane. Its function is as follows. One of the components of the core complex of photosystem II (PSII). PSII is a light-driven water:plastoquinone oxidoreductase that uses light energy to abstract electrons from H(2)O, generating O(2) and a proton gradient subsequently used for ATP formation. It consists of a core antenna complex that captures photons, and an electron transfer chain that converts photonic excitation into a charge separation. This is Photosystem II reaction center protein K from Picosynechococcus sp. (strain ATCC 27264 / PCC 7002 / PR-6) (Agmenellum quadruplicatum).